A 235-amino-acid chain; its full sequence is ATP-dependent dethiobiotin synthetase BioD (235 aa).

Residue G12–F17 participates in ATP binding. T16 is a binding site for Mg(2+). K37 is an active-site residue. A substrate-binding site is contributed by S41. Residues D51, E112–G115, and P202–L204 contribute to the ATP site. Positions 51 and 112 each coordinate Mg(2+).

Belongs to the dethiobiotin synthetase family. In terms of assembly, homodimer. Mg(2+) is required as a cofactor.

The protein localises to the cytoplasm. It catalyses the reaction (7R,8S)-7,8-diammoniononanoate + CO2 + ATP = (4R,5S)-dethiobiotin + ADP + phosphate + 3 H(+). It functions in the pathway cofactor biosynthesis; biotin biosynthesis; biotin from 7,8-diaminononanoate: step 1/2. Its function is as follows. Catalyzes a mechanistically unusual reaction, the ATP-dependent insertion of CO2 between the N7 and N8 nitrogen atoms of 7,8-diaminopelargonic acid (DAPA, also called 7,8-diammoniononanoate) to form a ureido ring. This is ATP-dependent dethiobiotin synthetase BioD from Bacillus licheniformis (strain ATCC 14580 / DSM 13 / JCM 2505 / CCUG 7422 / NBRC 12200 / NCIMB 9375 / NCTC 10341 / NRRL NRS-1264 / Gibson 46).